The chain runs to 353 residues: GTPase Obg (353 aa).

The region spanning 1 to 159 is the Obg domain; sequence MKFIDEATIK…FELYLELKVL (159 aa). An OBG-type G domain is found at 160–332; sequence ADVGLLGMPN…LTYAIMEHVE (173 aa). GTP contacts are provided by residues 166-173, 191-195, 213-216, 284-287, and 313-315; these read GMPNAGKS, FTTLH, DVPG, NKVD, and SAL. Mg(2+)-binding residues include Ser173 and Thr193.

This sequence belongs to the TRAFAC class OBG-HflX-like GTPase superfamily. OBG GTPase family. As to quaternary structure, monomer. Mg(2+) is required as a cofactor.

It localises to the cytoplasm. Its function is as follows. An essential GTPase which binds GTP, GDP and possibly (p)ppGpp with moderate affinity, with high nucleotide exchange rates and a fairly low GTP hydrolysis rate. Plays a role in control of the cell cycle, stress response, ribosome biogenesis and in those bacteria that undergo differentiation, in morphogenesis control. This Methylobacillus flagellatus (strain ATCC 51484 / DSM 6875 / VKM B-1610 / KT) protein is GTPase Obg.